Reading from the N-terminus, the 273-residue chain is MVFYKYSGSGNDFLIVQSFKKKDFSNLAKQVCHRHEGFGADGLVVVLPSKDYDYEWDFYNSDGSKAGMCGNASRCVGLFAYQHAIAPKEHVFLAGKREISIRIEEPNIIESNLGNYKILDVIPALRCEKFFTNDSVLENIPTFYLIDTGVPHLVGFVKNKEGLNSLNTLELRALRHEFNANINIAFIENKETIFLQTYERGVEDFTLACGTGMAAVFIAARIFYNTPKKAALIPKSNESLELSLKNDGIFYKGAVRYIGMSVLGMRVFENGCF.

Substrate-binding residues include Asn11 and Asn60. Cys69 functions as the Proton donor in the catalytic mechanism. Substrate contacts are provided by residues 70–71 (GN), Asn181, and 199–200 (ER). Cys209 acts as the Proton acceptor in catalysis. 210 to 211 (GT) contributes to the substrate binding site.

It belongs to the diaminopimelate epimerase family. In terms of assembly, homodimer.

It localises to the cytoplasm. It carries out the reaction (2S,6S)-2,6-diaminopimelate = meso-2,6-diaminopimelate. It functions in the pathway amino-acid biosynthesis; L-lysine biosynthesis via DAP pathway; DL-2,6-diaminopimelate from LL-2,6-diaminopimelate: step 1/1. Functionally, catalyzes the stereoinversion of LL-2,6-diaminopimelate (L,L-DAP) to meso-diaminopimelate (meso-DAP), a precursor of L-lysine and an essential component of the bacterial peptidoglycan. This chain is Diaminopimelate epimerase, found in Helicobacter pylori (strain HPAG1).